The primary structure comprises 150 residues: Small ribosomal subunit protein uS15 (150 aa).

A disordered region spans residues 1 to 22 (MNKRREKGQSHSTRPPHPQPPQ).

The protein belongs to the universal ribosomal protein uS15 family. In terms of assembly, part of the 30S ribosomal subunit.

The protein is Small ribosomal subunit protein uS15 of Aeropyrum pernix (strain ATCC 700893 / DSM 11879 / JCM 9820 / NBRC 100138 / K1).